Reading from the N-terminus, the 444-residue chain is Bystin (444 aa).

2 disordered regions span residues 1 to 37 (MAKK…HQKQ) and 53 to 85 (ALAQ…TAGE). Over residues 24 to 34 (SRKRSKVPKTH) the composition is skewed to basic residues. The span at 73–84 (AAFAVAGAATAG) shows a compositional bias: low complexity.

Belongs to the bystin family. In terms of assembly, component of the 40S pre-ribosome. As to expression, highly expressed in flowers and at lower levels in roots, hypocotyls, stems, leaves, siliques and seeds.

It is found in the nucleus. The protein localises to the nucleolus. It localises to the nucleoplasm. Its function is as follows. Essential protein required during embryogenesis and pollen development. Required for processing of 20S pre-rRNA precursor and biogenesis of 40S ribosomal subunits. The polypeptide is Bystin (Arabidopsis thaliana (Mouse-ear cress)).